Consider the following 556-residue polypeptide: Small ribosomal subunit protein uS3m (556 aa).

This sequence belongs to the universal ribosomal protein uS3 family. Component of the mitochondrial ribosome small subunit.

It localises to the mitochondrion. The polypeptide is Small ribosomal subunit protein uS3m (RPS3) (Arabidopsis thaliana (Mouse-ear cress)).